The sequence spans 292 residues: uncharacterized protein (292 aa).

The protein belongs to the glycosyltransferase 2 family. WaaE/KdtX subfamily.

This is an uncharacterized protein from Rickettsia typhi (strain ATCC VR-144 / Wilmington).